The following is a 195-amino-acid chain: MGLNFFMSRKIYYIKLLTGLYKKFIKALIVKKNESNNAYLLVETANFYNLVFSLQRSSLTQFKVLNDVCIVDYPEKIDRFELSYNLSSIKYNFRIFIKTYTSAYVPSISTLFNSANWIERECWDMFGVFFTNHPDLRRILTDYGFEGFPLRKDFPLTGYIEIRYDDEKANIVYEPLELSQEYRLFNFTSPWEKIK.

The protein belongs to the complex I 30 kDa subunit family. In terms of assembly, complex I is composed of about 30 different subunits.

It localises to the mitochondrion inner membrane. It catalyses the reaction a ubiquinone + NADH + 5 H(+)(in) = a ubiquinol + NAD(+) + 4 H(+)(out). Functionally, core subunit of the mitochondrial membrane respiratory chain NADH dehydrogenase (Complex I) that is believed to belong to the minimal assembly required for catalysis. Complex I functions in the transfer of electrons from NADH to the respiratory chain. The immediate electron acceptor for the enzyme is believed to be ubiquinone. The protein is NADH-ubiquinone oxidoreductase subunit 9 (NAD9) of Acanthamoeba castellanii (Amoeba).